The chain runs to 408 residues: Metacaspase-1B (408 aa).

Residues 1–98 (MYHRHSAPPP…PPLEAQQFGN (98 aa)) are disordered. Composition is skewed to pro residues over residues 24–49 (WPPP…FPPP) and 56–66 (SPYPTPPPHSP). Active-site residues include H199 and C255.

Belongs to the peptidase C14B family.

Involved in cell death (apoptosis). Required for the apoptotic-like loss of membrane phospholipid asymmetry at stationary phase and facilitates growth under conditions of endoplasmic reticulum stress. The polypeptide is Metacaspase-1B (casB) (Aspergillus fumigatus (strain CBS 144.89 / FGSC A1163 / CEA10) (Neosartorya fumigata)).